The chain runs to 623 residues: Sulfite reductase [NADPH] flavoprotein alpha-component (623 aa).

A disordered region spans residues 1–32 (MSFQKNEYSHKNVSEDNNGQGGNPPIASPLND). In terms of domain architecture, Flavodoxin-like spans 87-225 (LTIIFASQTG…AAEEWRKNAL (139 aa)). Residues 93 to 98 (SQTGNA), 140 to 143 (STNG), and 176 to 185 (LGDSSYEFFC) each bind FMN. The 215-residue stretch at 258 to 472 (QNPYTATLLT…VEHNNNFKLP (215 aa)) folds into the FAD-binding FR-type domain. FAD contacts are provided by residues T346, A380, 410–413 (RLYS), 428–430 (TVG), Y434, and 443–446 (GGAS). NADP(+) contacts are provided by residues 543-544 (SR), 549-553 (KVYVQ), and D585. FAD is bound at residue Y623.

The protein belongs to the NADPH-dependent sulphite reductase flavoprotein subunit CysJ family. It in the N-terminal section; belongs to the flavodoxin family. This sequence in the C-terminal section; belongs to the flavoprotein pyridine nucleotide cytochrome reductase family. In terms of assembly, alpha(8)-beta(8). The alpha component is a flavoprotein, the beta component is a hemoprotein. Requires FAD as cofactor. FMN is required as a cofactor.

The catalysed reaction is hydrogen sulfide + 3 NADP(+) + 3 H2O = sulfite + 3 NADPH + 4 H(+). The protein operates within sulfur metabolism; hydrogen sulfide biosynthesis; hydrogen sulfide from sulfite (NADPH route): step 1/1. Functionally, component of the sulfite reductase complex that catalyzes the 6-electron reduction of sulfite to sulfide. This is one of several activities required for the biosynthesis of L-cysteine from sulfate. The flavoprotein component catalyzes the electron flow from NADPH -&gt; FAD -&gt; FMN to the hemoprotein component. This is Sulfite reductase [NADPH] flavoprotein alpha-component from Vibrio parahaemolyticus serotype O3:K6 (strain RIMD 2210633).